An 871-amino-acid polypeptide reads, in one-letter code: Tegument protein UL47 homolog (871 aa).

The disordered stretch occupies residues 1 to 212 (MDQHHGARGG…DEDDMEVIRD (212 aa)). The short motif at 13-33 (IRRPRRSIESRSHPFRATGNT) is the Nuclear localization signal element. Polar residues-rich tracts occupy residues 30–41 (TGNTQRTYSTPR) and 59–81 (EQASNQDESSNPSTSNAQQSTSF). 3 stretches are compositionally biased toward acidic residues: residues 114-134 (SSSEEEEEEGPAQAPLDEEDQ), 146-155 (SSDENDEEED), and 185-207 (SESETDIDAEEEEEDDEDDEDDM).

The protein belongs to the alphaherpesvirinae HHV-1 UL47 family. Interacts with US3 kinase. Interacts with UL31 and UL34; these interactions seem important for efficient virion nuclear egress. Interacts with UL41/VHS. Phosphorylated by US3. This phosphorylation is required for proper nuclear localization.

It localises to the virion tegument. The protein resides in the host nucleus. Its subcellular location is the host cytoplasm. Tegument protein that can bind to various RNA transcripts. Plays a role in the attenuation of selective viral and cellular mRNA degradation by modulating the activity of host shutoff RNase UL41/VHS. Also plays a role in the primary envelopment of virions in the perinuclear space, probably by interacting with two nuclear egress proteins UL31 and UL34. The chain is Tegument protein UL47 homolog from Equine herpesvirus 1 (strain V592) (EHV-1).